A 252-amino-acid chain; its full sequence is Thiazole synthase (252 aa).

The active-site Schiff-base intermediate with DXP is the Lys-95. 1-deoxy-D-xylulose 5-phosphate contacts are provided by residues Gly-156, 182–183 (AG), and 204–205 (NT).

Belongs to the ThiG family. As to quaternary structure, homotetramer. Forms heterodimers with either ThiH or ThiS.

Its subcellular location is the cytoplasm. The catalysed reaction is [ThiS sulfur-carrier protein]-C-terminal-Gly-aminoethanethioate + 2-iminoacetate + 1-deoxy-D-xylulose 5-phosphate = [ThiS sulfur-carrier protein]-C-terminal Gly-Gly + 2-[(2R,5Z)-2-carboxy-4-methylthiazol-5(2H)-ylidene]ethyl phosphate + 2 H2O + H(+). The protein operates within cofactor biosynthesis; thiamine diphosphate biosynthesis. Functionally, catalyzes the rearrangement of 1-deoxy-D-xylulose 5-phosphate (DXP) to produce the thiazole phosphate moiety of thiamine. Sulfur is provided by the thiocarboxylate moiety of the carrier protein ThiS. In vitro, sulfur can be provided by H(2)S. The polypeptide is Thiazole synthase (Shewanella sp. (strain ANA-3)).